The following is a 488-amino-acid chain: Putative BPI/LBP family protein At1g04970 (488 aa).

Residues 1-24 (MDVGRCFLFLLLPSFFFLPSQTQS) form the signal peptide. N79, N109, N231, N242, and N341 each carry an N-linked (GlcNAc...) asparagine glycan.

Belongs to the BPI/LBP/Plunc superfamily. BPI/LBP (TC 1.C.40) family.

The protein is Putative BPI/LBP family protein At1g04970 of Arabidopsis thaliana (Mouse-ear cress).